The sequence spans 344 residues: Succinylglutamate desuccinylase (344 aa).

Positions 63, 66, and 160 each coordinate Zn(2+). Glu224 is a catalytic residue.

This sequence belongs to the AspA/AstE family. Succinylglutamate desuccinylase subfamily. Zn(2+) serves as cofactor.

It carries out the reaction N-succinyl-L-glutamate + H2O = L-glutamate + succinate. The protein operates within amino-acid degradation; L-arginine degradation via AST pathway; L-glutamate and succinate from L-arginine: step 5/5. Functionally, transforms N(2)-succinylglutamate into succinate and glutamate. This chain is Succinylglutamate desuccinylase, found in Shewanella sp. (strain MR-4).